The primary structure comprises 130 residues: Small ribosomal subunit protein bS16 (130 aa).

Residues 82-130 form a disordered region; sequence VLPKTERNNPKKAVPGKKAQDRAEEKAAKAAEASEAPADEAPAEEAAAE. The segment covering 99-110 has biased composition (basic and acidic residues); it reads KAQDRAEEKAAK. Residues 118–130 are compositionally biased toward acidic residues; the sequence is PADEAPAEEAAAE.

The protein belongs to the bacterial ribosomal protein bS16 family.

The chain is Small ribosomal subunit protein bS16 from Dinoroseobacter shibae (strain DSM 16493 / NCIMB 14021 / DFL 12).